The following is a 636-amino-acid chain: ATP-dependent zinc metalloprotease FtsH (636 aa).

Residues Met1–Met12 are Cytoplasmic-facing. The helical transmembrane segment at Gly13 to Ile33 threads the bilayer. The Periplasmic segment spans residues Arg34–Leu104. Residues Leu105–Phe125 form a helical membrane-spanning segment. Residues Met126–Glu636 are Cytoplasmic-facing. Residue Gly197–Thr204 coordinates ATP. A Zn(2+)-binding site is contributed by His419. The active site involves Glu420. His423 and Asp497 together coordinate Zn(2+).

This sequence in the central section; belongs to the AAA ATPase family. It in the C-terminal section; belongs to the peptidase M41 family. In terms of assembly, homohexamer. Requires Zn(2+) as cofactor.

Its subcellular location is the cell inner membrane. Functionally, acts as a processive, ATP-dependent zinc metallopeptidase for both cytoplasmic and membrane proteins. Plays a role in the quality control of integral membrane proteins. The chain is ATP-dependent zinc metalloprotease FtsH from Neorickettsia risticii (strain Illinois).